The following is a 292-amino-acid chain: Bifunctional protein FolD 1 (292 aa).

An NADP(+)-binding site is contributed by 165-167 (GRS).

It belongs to the tetrahydrofolate dehydrogenase/cyclohydrolase family. As to quaternary structure, homodimer.

The enzyme catalyses (6R)-5,10-methylene-5,6,7,8-tetrahydrofolate + NADP(+) = (6R)-5,10-methenyltetrahydrofolate + NADPH. The catalysed reaction is (6R)-5,10-methenyltetrahydrofolate + H2O = (6R)-10-formyltetrahydrofolate + H(+). It participates in one-carbon metabolism; tetrahydrofolate interconversion. Catalyzes the oxidation of 5,10-methylenetetrahydrofolate to 5,10-methenyltetrahydrofolate and then the hydrolysis of 5,10-methenyltetrahydrofolate to 10-formyltetrahydrofolate. This is Bifunctional protein FolD 1 from Myxococcus xanthus (strain DK1622).